Reading from the N-terminus, the 529-residue chain is Probable threonine/serine exporter (529 aa).

Helical transmembrane passes span 88-108 (ITVT…PVTI), 168-188 (FALG…LAAV), 212-232 (VFGA…AGQD), 234-254 (TALV…VGSM), 265-285 (ALAR…GILI), 312-332 (MPLP…CLTI), 344-364 (AGLS…AGFG), 365-385 (RVVA…LISI), 389-409 (APAL…LAVF), and 428-448 (LLEA…GEFL). The segment at 482-501 (QPAKSQQPTGTGGQRWRSVA) is disordered.

It belongs to the ThrE exporter (TC 2.A.79) family.

The protein resides in the cell membrane. The catalysed reaction is L-threonine(in) + H(+)(out) = L-threonine(out) + H(+)(in). Its function is as follows. Catalyzes the export of L-threonine and L-serine from the cell to the extracellular environment. Export is dependent on the proton motive force. Required for in vitro growth and survival of bacteria inside macrophages. Increased expression is associated with low-level amikacin (AMK) resistance. The protein is Probable threonine/serine exporter of Mycobacterium tuberculosis (strain ATCC 25618 / H37Rv).